The chain runs to 189 residues: uncharacterized protein (189 aa).

The HTH tetR-type domain maps to 9–69 (ADTGGRILRA…SMLTSHIADV (61 aa)). Positions 32–51 (TLAEIARRAGVSRPTVYRRW) form a DNA-binding region, H-T-H motif.

This is an uncharacterized protein from Mycobacterium tuberculosis (strain CDC 1551 / Oshkosh).